We begin with the raw amino-acid sequence, 603 residues long: UvrABC system protein C (603 aa).

Residues Ser13 to Val92 form the GIY-YIG domain. The UVR domain occupies Glu205–Ala240.

The protein belongs to the UvrC family. Interacts with UvrB in an incision complex.

It is found in the cytoplasm. Functionally, the UvrABC repair system catalyzes the recognition and processing of DNA lesions. UvrC both incises the 5' and 3' sides of the lesion. The N-terminal half is responsible for the 3' incision and the C-terminal half is responsible for the 5' incision. The protein is UvrABC system protein C of Chlamydia pneumoniae (Chlamydophila pneumoniae).